Here is a 55-residue protein sequence, read N- to C-terminus: Beta-toxin Cn7 (55 aa).

The LCN-type CS-alpha/beta domain maps to 1 to 55 (KEGYIVNYHDGCKYECYKLGDNDYCLRECKLRVGKGAGGYCYAFACWCTHLYEQA). 3 cysteine pairs are disulfide-bonded: Cys-16–Cys-41, Cys-25–Cys-46, and Cys-29–Cys-48.

It belongs to the long (3 C-C) scorpion toxin superfamily. Sodium channel inhibitor family. Beta subfamily. Expressed by the venom gland.

It is found in the secreted. Functionally, beta toxins bind voltage-independently at site-4 of sodium channels (Nav) and shift the voltage of activation toward more negative potentials thereby affecting sodium channel activation and promoting spontaneous and repetitive firing. The sequence is that of Beta-toxin Cn7 from Centruroides noxius (Mexican scorpion).